A 1413-amino-acid polypeptide reads, in one-letter code: DNA-directed RNA polymerase subunit beta' (1413 aa).

Residues cysteine 70, cysteine 72, cysteine 85, and cysteine 88 each contribute to the Zn(2+) site. Residues aspartate 460, aspartate 462, and aspartate 464 each contribute to the Mg(2+) site. Zn(2+) is bound by residues cysteine 819, cysteine 893, cysteine 900, and cysteine 903. A disordered region spans residues 1392 to 1413 (EEAFDFGTPSAPAEEPQHPAAE).

Belongs to the RNA polymerase beta' chain family. In terms of assembly, the RNAP catalytic core consists of 2 alpha, 1 beta, 1 beta' and 1 omega subunit. When a sigma factor is associated with the core the holoenzyme is formed, which can initiate transcription. Mg(2+) serves as cofactor. It depends on Zn(2+) as a cofactor.

The catalysed reaction is RNA(n) + a ribonucleoside 5'-triphosphate = RNA(n+1) + diphosphate. DNA-dependent RNA polymerase catalyzes the transcription of DNA into RNA using the four ribonucleoside triphosphates as substrates. In Burkholderia orbicola (strain MC0-3), this protein is DNA-directed RNA polymerase subunit beta'.